Reading from the N-terminus, the 108-residue chain is MSGPNGDPNISVEDGLINDDDDFGSEEYEAINSMLDQINSYLDDLEERNDSLNGKLHELMESNRQARLEFRAQLSNHTPQEDSADGESKEELGGDAGWENDKKIDEGS.

Disordered regions lie at residues 1–23 (MSGPNGDPNISVEDGLINDDDDF) and 67–108 (RLEF…DEGS). Positions 25-73 (SEEYEAINSMLDQINSYLDDLEERNDSLNGKLHELMESNRQARLEFRAQ) form a coiled coil. Basic and acidic residues predominate over residues 99 to 108 (ENDKKIDEGS).

This sequence belongs to the UPF0184 (EST00098) family.

It is found in the cell junction. Its subcellular location is the cytoplasm. The protein localises to the cytoskeleton. Essential for intermediate filament organization in intestinal cells, interacts with intermediate filament and regulates intestinal lumen morphology. The protein is Bublin coiled-coil protein (bbln) of Takifugu rubripes (Japanese pufferfish).